Consider the following 277-residue polypeptide: Shikimate dehydrogenase (NADP(+)) (277 aa).

Shikimate-binding positions include 20 to 22 (SLS) and Thr-67. Residue Lys-71 is the Proton acceptor of the active site. Residue Asp-83 participates in NADP(+) binding. Positions 92 and 107 each coordinate shikimate. NADP(+)-binding positions include 131–135 (GAGGV) and Ile-219. Shikimate is bound at residue Tyr-221. Gly-242 is a binding site for NADP(+).

It belongs to the shikimate dehydrogenase family. Homodimer.

It catalyses the reaction shikimate + NADP(+) = 3-dehydroshikimate + NADPH + H(+). It participates in metabolic intermediate biosynthesis; chorismate biosynthesis; chorismate from D-erythrose 4-phosphate and phosphoenolpyruvate: step 4/7. Involved in the biosynthesis of the chorismate, which leads to the biosynthesis of aromatic amino acids. Catalyzes the reversible NADPH linked reduction of 3-dehydroshikimate (DHSA) to yield shikimate (SA). The chain is Shikimate dehydrogenase (NADP(+)) from Pelobacter propionicus (strain DSM 2379 / NBRC 103807 / OttBd1).